Reading from the N-terminus, the 349-residue chain is 2-oxoglutarate and iron-dependent oxygenase domain-containing protein 2 (349 aa).

One can recognise a Fe2OG dioxygenase domain in the interval 211-305 (DSHRAFVVKY…RWNLILWMRA (95 aa)). Histidine 231, aspartate 233, and histidine 286 together coordinate Fe cation. Arginine 296 provides a ligand contact to 2-oxoglutarate.

The protein belongs to the OGFOD2 family. Requires Fe(2+) as cofactor. L-ascorbate serves as cofactor.

This is 2-oxoglutarate and iron-dependent oxygenase domain-containing protein 2 (ogfod2) from Xenopus tropicalis (Western clawed frog).